A 262-amino-acid polypeptide reads, in one-letter code: Hydroxyethylthiazole kinase (262 aa).

Residue Met-50 coordinates substrate. ATP contacts are provided by Arg-125 and Thr-171. Residue Gly-198 coordinates substrate.

The protein belongs to the Thz kinase family. Requires Mg(2+) as cofactor.

It carries out the reaction 5-(2-hydroxyethyl)-4-methylthiazole + ATP = 4-methyl-5-(2-phosphooxyethyl)-thiazole + ADP + H(+). It participates in cofactor biosynthesis; thiamine diphosphate biosynthesis; 4-methyl-5-(2-phosphoethyl)-thiazole from 5-(2-hydroxyethyl)-4-methylthiazole: step 1/1. Its function is as follows. Catalyzes the phosphorylation of the hydroxyl group of 4-methyl-5-beta-hydroxyethylthiazole (THZ). The sequence is that of Hydroxyethylthiazole kinase from Escherichia coli O6:H1 (strain CFT073 / ATCC 700928 / UPEC).